A 232-amino-acid polypeptide reads, in one-letter code: Thiamine import ATP-binding protein ThiQ (232 aa).

In terms of domain architecture, ABC transporter spans 2-230; that stretch reads LKLTDITWLY…KASASALLGI (229 aa). 32–39 serves as a coordination point for ATP; the sequence is GPSGAGKS.

This sequence belongs to the ABC transporter superfamily. Thiamine importer (TC 3.A.1.19.1) family. As to quaternary structure, the complex is composed of two ATP-binding proteins (ThiQ), two transmembrane proteins (ThiP) and a solute-binding protein (ThiB).

Its subcellular location is the cell inner membrane. The enzyme catalyses thiamine(out) + ATP + H2O = thiamine(in) + ADP + phosphate + H(+). In terms of biological role, part of the ABC transporter complex ThiBPQ involved in thiamine import. Responsible for energy coupling to the transport system. The protein is Thiamine import ATP-binding protein ThiQ of Escherichia coli O6:K15:H31 (strain 536 / UPEC).